We begin with the raw amino-acid sequence, 224 residues long: MEINEKLLRQIIEDVLSEMQTSDKPVSFRASTAASAPQAAAAQGDSFLTEIGEAKQGQQQDEVIIAVGPAFGLSQTVNIVGIPHKNILREVIAGIEEEGIKARVIRCFKSSDVAFVAVEGNRLSGSGISIGIQSKGTTVIHQQGLPPLSNLELFPQAPLLTLETYRQIGKNAARYAKRESPQPVPTLNDQMARPKYQAKSAILHIKETKYVVTGKNPQELRVAL.

Residues 1 to 18 form a targets protein to the BMC region; it reads MEINEKLLRQIIEDVLSE.

It belongs to the diol/glycerol dehydratase medium subunit family. The propanediol dehydratase enzyme is a heterotrimeric complex composed of a large (PduC), a medium (PduD) and a small (PduE) subunit. It depends on adenosylcob(III)alamin as a cofactor.

Its subcellular location is the bacterial microcompartment. The enzyme catalyses propane-1,2-diol = propanal + H2O. It functions in the pathway polyol metabolism; 1,2-propanediol degradation. Functionally, part of the PduCDE complex that catalyzes the dehydration of 1,2-propanediol (1,2-PD) to propionaldehyde. This subunit is directly targeted to the bacterial microcompartment (BMC). In terms of biological role, expression of a cosmid containing the full 21-gene pdu operon in E.coli allows E.coli to grow on 1,2-propanediol (1,2-PD) with the appearance of BMCs in its cytoplasm. The 1,2-PD-specific bacterial microcompartment (BMC) concentrates low levels of 1,2-PD catabolic enzymes, concentrates volatile reaction intermediates thus enhancing pathway flux and keeps the level of toxic, mutagenic propionaldehyde low. The polypeptide is Propanediol dehydratase medium subunit (Citrobacter freundii).